Consider the following 111-residue polypeptide: ATP-dependent Clp protease adapter protein ClpS (111 aa).

This sequence belongs to the ClpS family. In terms of assembly, binds to the N-terminal domain of the chaperone ClpA.

Functionally, involved in the modulation of the specificity of the ClpAP-mediated ATP-dependent protein degradation. The protein is ATP-dependent Clp protease adapter protein ClpS of Leptospira interrogans serogroup Icterohaemorrhagiae serovar copenhageni (strain Fiocruz L1-130).